A 635-amino-acid polypeptide reads, in one-letter code: UvrABC system protein C (635 aa).

Residues 20–97 enclose the GIY-YIG domain; that stretch reads ERSGVYRMFD…IKKFQPKFNI (78 aa). In terms of domain architecture, UVR spans 207 to 242; it reads KELQENLSKKMEELSEQMRFEEAAEIRDRIKALSYV.

This sequence belongs to the UvrC family. In terms of assembly, interacts with UvrB in an incision complex.

The protein resides in the cytoplasm. Functionally, the UvrABC repair system catalyzes the recognition and processing of DNA lesions. UvrC both incises the 5' and 3' sides of the lesion. The N-terminal half is responsible for the 3' incision and the C-terminal half is responsible for the 5' incision. The protein is UvrABC system protein C of Rickettsia bellii (strain RML369-C).